The chain runs to 341 residues: Gibberellin 2-beta-dioxygenase 2 (341 aa).

The Fe2OG dioxygenase domain maps to 179 to 283 (KSDSCLRLNH…RISMIYFGGP (105 aa)). Residues His-207, Asp-209, and His-264 each contribute to the Fe cation site. Arg-274 is an active-site residue. Arg-274 is a binding site for 2-oxoglutarate.

This sequence belongs to the iron/ascorbate-dependent oxidoreductase family. GA2OX subfamily. Requires Fe(2+) as cofactor. Preferentially expressed in flowers, siliques, and upper stems. Expressed in cotyledons, at the base of the shoot apical meristem and developing leaf primordia.

The catalysed reaction is gibberellin A1 + 2-oxoglutarate + O2 = gibberellin A8 + succinate + CO2. The protein operates within plant hormone biosynthesis; gibberellin biosynthesis. Catalyzes the 2-beta-hydroxylation of several biologically active gibberellins, leading to the homeostatic regulation of their endogenous level. Catabolism of gibberellins (GAs) plays a central role in plant development. Converts GA9/GA20 to GA51/GA29 and GA4/GA1 to GA34/GA8. The sequence is that of Gibberellin 2-beta-dioxygenase 2 (GA2OX2) from Arabidopsis thaliana (Mouse-ear cress).